Here is a 121-residue protein sequence, read N- to C-terminus: Large ribosomal subunit protein uL14c (121 aa).

The protein belongs to the universal ribosomal protein uL14 family. In terms of assembly, part of the 50S ribosomal subunit.

Its subcellular location is the plastid. The protein resides in the chloroplast. Binds to 23S rRNA. The chain is Large ribosomal subunit protein uL14c from Thalassiosira pseudonana (Marine diatom).